We begin with the raw amino-acid sequence, 257 residues long: Imidazole glycerol phosphate synthase subunit HisF (257 aa).

Catalysis depends on residues aspartate 11 and aspartate 130.

The protein belongs to the HisA/HisF family. As to quaternary structure, heterodimer of HisH and HisF.

The protein localises to the cytoplasm. The enzyme catalyses 5-[(5-phospho-1-deoxy-D-ribulos-1-ylimino)methylamino]-1-(5-phospho-beta-D-ribosyl)imidazole-4-carboxamide + L-glutamine = D-erythro-1-(imidazol-4-yl)glycerol 3-phosphate + 5-amino-1-(5-phospho-beta-D-ribosyl)imidazole-4-carboxamide + L-glutamate + H(+). The protein operates within amino-acid biosynthesis; L-histidine biosynthesis; L-histidine from 5-phospho-alpha-D-ribose 1-diphosphate: step 5/9. IGPS catalyzes the conversion of PRFAR and glutamine to IGP, AICAR and glutamate. The HisF subunit catalyzes the cyclization activity that produces IGP and AICAR from PRFAR using the ammonia provided by the HisH subunit. In Psychromonas ingrahamii (strain DSM 17664 / CCUG 51855 / 37), this protein is Imidazole glycerol phosphate synthase subunit HisF.